We begin with the raw amino-acid sequence, 46 residues long: Major cold shock protein (46 aa).

The CSD domain occupies 1–46 (EKGFGFLTQNNGGADVFVHFRAIASEGFKTLTEGQKVSFDVEQGQK).

As to quaternary structure, homodimer.

The protein localises to the cytoplasm. This chain is Major cold shock protein (cspA), found in Photobacterium leiognathi subsp. mandapamensis (Photobacterium mandapamensis).